Consider the following 86-residue polypeptide: Large ribosomal subunit protein bL31B (86 aa).

The protein belongs to the bacterial ribosomal protein bL31 family. Type B subfamily. In terms of assembly, part of the 50S ribosomal subunit.

This Streptococcus pyogenes serotype M1 protein is Large ribosomal subunit protein bL31B.